The following is a 230-amino-acid chain: C-methyltransferase CouO (230 aa).

Belongs to the methyltransferase superfamily.

It participates in antibiotic biosynthesis. Its function is as follows. Mediates C-methylation at the 8-position of the aminocoumarin moieties in coumermycin A1 in the biosynthetic pathway of coumermycin antibiotic. Active on both mono- and bis-amides for mono- and di-C-methylation adjacent to the phenolic hydroxyl before it is glycosylated by CouM. This is C-methyltransferase CouO (couO) from Streptomyces rishiriensis.